Here is a 359-residue protein sequence, read N- to C-terminus: GalNAc-alpha-(1-&gt;4)-GalNAc-alpha-(1-&gt;3)-diNAcBac-PP-undecaprenol alpha-1,4-N-acetyl-D-galactosaminyltransferase (359 aa).

E17 contributes to the substrate binding site. A UDP-N-acetyl-alpha-D-galactosamine-binding site is contributed by Y45. 71-74 is a substrate binding site; it reads RFKK. Residues H117, R190, K195, V246, and 266-274 contribute to the UDP-N-acetyl-alpha-D-galactosamine site; that span reads EGLPTVLIE. R190 serves as a coordination point for substrate.

This sequence belongs to the glycosyltransferase group 1 family.

The protein resides in the cell inner membrane. It catalyses the reaction N-acetyl-alpha-D-galactosaminyl-(1-&gt;4)-N-acetyl-alpha-D-galactosaminyl-(1-&gt;3)-N,N'-diacetyl-alpha-D-bacillosaminyl-tri-trans,heptacis-undecaprenyl diphosphate + 3 UDP-N-acetyl-alpha-D-galactosamine = [alpha-D-GalNAc-(1-&gt;4)]4-alpha-D-GalNAc-(1-&gt;3)-alpha-D-diNAcBac-tri-trans,hepta-cis-undecaprenyl diphosphate + 3 UDP + 3 H(+). Its pathway is protein modification; protein glycosylation. In terms of biological role, processive glycosyltransferase that is part of the biosynthetic pathway of the lipid-linked oligosaccharide (LLO) that serves as the glycan donor in bacterial protein N-glycosylation. Catalyzes the transfer of exactly three alpha-(1-&gt;4)-N-acetylgalactosamine (GalNAc) units to the growing LLO precursor, GalNAc-alpha-(1-&gt;4)-GalNAc-alpha-(1-&gt;3)-diNAcBac-PP-undecaprenyl. Cannot accept UDP-GlcNAc as substrate. This is GalNAc-alpha-(1-&gt;4)-GalNAc-alpha-(1-&gt;3)-diNAcBac-PP-undecaprenol alpha-1,4-N-acetyl-D-galactosaminyltransferase from Campylobacter jejuni subsp. jejuni serotype O:2 (strain ATCC 700819 / NCTC 11168).